Consider the following 257-residue polypeptide: MLAKRIVPCLDVKDGCVVKGVQFRNHEIVGDIVPLAARYAAEGADELVFYDITASAHDRVVDKSWVSRVAEQIDIPFCVAGGIKTIGQARELLAFGADKISVNSPALSDPSLISRLQDEFGRQCIVIGIDSFYDAASDSYKVKQFTGDEAATKETAWYTQDWVEEVQKRGCGEIVLNVMNQDGVRGGYDIKQLSLVRQLCDVPLIASGGAGTMAHFRDVFIEAKVDAALAASVFHKAIINIGELKQYLAAEGIAIRL.

Active-site residues include Asp-11 and Asp-130.

The protein belongs to the HisA/HisF family. Heterodimer of HisH and HisF.

It is found in the cytoplasm. The catalysed reaction is 5-[(5-phospho-1-deoxy-D-ribulos-1-ylimino)methylamino]-1-(5-phospho-beta-D-ribosyl)imidazole-4-carboxamide + L-glutamine = D-erythro-1-(imidazol-4-yl)glycerol 3-phosphate + 5-amino-1-(5-phospho-beta-D-ribosyl)imidazole-4-carboxamide + L-glutamate + H(+). Its pathway is amino-acid biosynthesis; L-histidine biosynthesis; L-histidine from 5-phospho-alpha-D-ribose 1-diphosphate: step 5/9. Functionally, IGPS catalyzes the conversion of PRFAR and glutamine to IGP, AICAR and glutamate. The HisF subunit catalyzes the cyclization activity that produces IGP and AICAR from PRFAR using the ammonia provided by the HisH subunit. The polypeptide is Imidazole glycerol phosphate synthase subunit HisF (Shewanella sp. (strain MR-7)).